A 311-amino-acid chain; its full sequence is Methionyl-tRNA formyltransferase (311 aa).

Position 110 to 113 (110 to 113 (SLLP)) interacts with (6S)-5,6,7,8-tetrahydrofolate.

Belongs to the Fmt family.

It catalyses the reaction L-methionyl-tRNA(fMet) + (6R)-10-formyltetrahydrofolate = N-formyl-L-methionyl-tRNA(fMet) + (6S)-5,6,7,8-tetrahydrofolate + H(+). Functionally, attaches a formyl group to the free amino group of methionyl-tRNA(fMet). The formyl group appears to play a dual role in the initiator identity of N-formylmethionyl-tRNA by promoting its recognition by IF2 and preventing the misappropriation of this tRNA by the elongation apparatus. This chain is Methionyl-tRNA formyltransferase, found in Streptococcus pneumoniae serotype 2 (strain D39 / NCTC 7466).